A 2192-amino-acid chain; its full sequence is BEACH domain-containing protein lvsE (2192 aa).

Disordered stretches follow at residues 948 to 969, 996 to 1065, 1160 to 1303, and 1343 to 1363; these read STSL…TSTG, TTTT…DEPE, NESQ…NNLS, and DENG…SSSN. The segment covering 996–1049 has biased composition (low complexity); that stretch reads TTTTTTTTTTTTTTSTTSNTGNDSPLSIESPISSPVLIENTTNTTNTTTTNTTN. Residues 1171-1187 show a composition bias toward polar residues; sequence NIDNLNPNTGLPYNKST. Positions 1188-1231 are enriched in low complexity; the sequence is NNLSNVNNVNNNNNNNSNNINVSGNNTIGPSSSKSPLRNSRSMS. The segment covering 1232 to 1243 has biased composition (polar residues); that stretch reads IGSSATKSPSRQ. Low complexity-rich tracts occupy residues 1253–1303 and 1350–1363; these read NNNS…NNLS and SSPN…SSSN. The BEACH-type PH domain occupies 1366-1491; it reads IEEEKFIGSW…ESIQIFNKIV (126 aa). The 292-residue stretch at 1504-1795 folds into the BEACH domain; that stretch reads DHPSKIIKKS…QLFSKPHPIR (292 aa). Residues 1823–1849 show a composition bias toward low complexity; it reads GTINSSFSSTSTSTSTSSPPPSTLNSP. The interval 1823–1851 is disordered; it reads GTINSSFSSTSTSTSTSSPPPSTLNSPQG. WD repeat units lie at residues 1973–2012, 2022–2061, and 2156–2192; these read FHHD…IKDS, SHDE…YQRS, and DSPA…VKDL.

This chain is BEACH domain-containing protein lvsE (lvsE), found in Dictyostelium discoideum (Social amoeba).